The following is a 351-amino-acid chain: Glycerol-3-phosphate dehydrogenase 1-like protein (351 aa).

11–16 (GSGNWG) contacts NAD(+). Lysine 121 is a binding site for substrate. Alanine 154 lines the NAD(+) pocket. Catalysis depends on lysine 205, which acts as the Proton acceptor. Arginine 271, lysine 298, and glutamine 300 together coordinate NAD(+). Residue 271 to 272 (RN) participates in substrate binding.

It belongs to the NAD-dependent glycerol-3-phosphate dehydrogenase family.

Its subcellular location is the cytoplasm. It catalyses the reaction sn-glycerol 3-phosphate + NAD(+) = dihydroxyacetone phosphate + NADH + H(+). In terms of biological role, plays a role in regulating cardiac sodium current. This Danio rerio (Zebrafish) protein is Glycerol-3-phosphate dehydrogenase 1-like protein (gpd1l).